A 2261-amino-acid polypeptide reads, in one-letter code: Phospholipid-transporting ATPase ABCA1 (2261 aa).

Cys-3 carries the S-palmitoyl cysteine lipid modification. A glycan (N-linked (GlcNAc...) asparagine) is linked at Asn-14. A helical membrane pass occupies residues 22–42 (TCQLLLEVAWPLFIFLILISV). Residue Cys-23 is the site of S-palmitoyl cysteine attachment. At 43–639 (RLSYPPYEQH…DIFLRVMSRS (597 aa)) the chain is on the extracellular side. An annulus domain 1 region spans residues 69–80 (WVQGIICNANNP). A disulfide bridge connects residues Cys-75 and Cys-309. N-linked (GlcNAc...) asparagine glycosylation is found at Asn-98, Asn-151, Asn-161, Asn-196, Asn-244, Asn-292, Asn-337, and Asn-349. Residues 368-379 (SRIIWKALKPLL) form an annulus domain 2 region. Residues Asn-400, Asn-478, Asn-489, and Asn-521 are each glycosylated (N-linked (GlcNAc...) asparagine). The tract at residues 564–594 (ERTNKIKDGYWDPGPRADPFEDMRYVWGGFA) is gateway domain. A run of 5 helical transmembrane segments spans residues 640 to 660 (MPLF…KSIV), 683 to 703 (FSWF…LVVI), 716 to 736 (SVVF…CFLI), 745 to 765 (LAAA…VLCV), and 777 to 797 (IFAS…FALF). N-linked (GlcNAc...) asparagine glycosylation occurs at Asn-820. The helical transmembrane segment at 827-847 (MMLFDTFLYGVMTWYIEAVFP) threads the bilayer. Residues 899-1131 (VSIQNLVKVY…LGTGYYLTLV (233 aa)) enclose the ABC transporter 1 domain. 933 to 940 (GHNGAGKT) contacts ATP. Residues 941 to 961 (TTMSILTGLFPPTSGTAYILG) form a helical membrane-spanning segment. Ser-1042 is modified (phosphoserine; by PKA). Residues Cys-1110 and Cys-1111 are each lipidated (S-palmitoyl cysteine). N-linked (GlcNAc...) asparagine glycosylation is found at Asn-1144 and Asn-1294. The interval 1285-1310 (FTEDDAVDPNDSDIDPESRETDLLSG) is disordered. Residues 1287–1299 (EDDAVDPNDSDID) are compositionally biased toward acidic residues. At Ser-1296 the chain carries Phosphoserine. The helical transmembrane segment at 1351 to 1371 (IVLPAVFVCIALVFSLIVPPF) threads the bilayer. The Extracellular segment spans residues 1372 to 1656 (GKYPSLELQP…ALMTTSVDVL (285 aa)). Asn-1453 carries N-linked (GlcNAc...) asparagine glycosylation. A disulfide bond links Cys-1463 and Cys-1477. Residues Asn-1499, Asn-1504, and Asn-1637 are each glycosylated (N-linked (GlcNAc...) asparagine). Helical transmembrane passes span 1657–1677 (VSIC…VFLI), 1703–1723 (FVWD…IFIC), 1735–1755 (LPVL…LMYP), 1768–1788 (VVLT…TFVL), 1802–1822 (ILKS…LIDM), and 1852–1872 (NLFA…LIQY). An ABC transporter 2 domain is found at 1912-2144 (LEIKELTKIY…FGDGYTIVVR (233 aa)). 1946–1953 (GVNGAGKS) contacts ATP. Asn-2044 is a glycosylation site (N-linked (GlcNAc...) asparagine). Ser-2054 carries the post-translational modification Phosphoserine; by PKA. An N-linked (GlcNAc...) asparagine glycan is attached at Asn-2238.

It belongs to the ABC transporter superfamily. ABCA family. As to quaternary structure, interacts with MEGF10. May interact with APOE1; functionally associated with APOE1 in the biogenesis of HDLs. Interacts with ABCA8; this interaction potentiates cholesterol efflux. Interacts with ABCA12 and NR1H2; this interaction is required for ABCA1 localization to the cell surface and is necessary for its normal activity and stability. Post-translationally, phosphorylation on Ser-2054 regulates phospholipid efflux. Palmitoylated by ZDHHC8. Palmitoylation is essential for localization to the plasma membrane. Widely expressed in adult tissues. Highest levels are found in pregnant uterus and uterus.

It is found in the cell membrane. It localises to the endosome. It carries out the reaction ATP + H2O + phospholipidSide 1 = ADP + phosphate + phospholipidSide 2.. The catalysed reaction is a 1,2-diacyl-sn-glycero-3-phosphocholine(out) + ATP + H2O = a 1,2-diacyl-sn-glycero-3-phosphocholine(in) + ADP + phosphate + H(+). It catalyses the reaction a 1,2-diacyl-sn-glycero-3-phospho-L-serine(out) + ATP + H2O = a 1,2-diacyl-sn-glycero-3-phospho-L-serine(in) + ADP + phosphate + H(+). The enzyme catalyses a sphingomyelin(in) + ATP + H2O = a sphingomyelin(out) + ADP + phosphate + H(+). It carries out the reaction cholesterol(in) + ATP + H2O = cholesterol(out) + ADP + phosphate + H(+). ATPase activity is decreased by cholesterol and ceramide. ATPase activity is stimulated by phosphatidylcholine and to a lesser degree by phosphatidylserine and sphingomyelin. Phospholipid translocase activity is highly reduced by berylium fluoride and aluminum flouride and reduced by N-ethylmaleimide. In terms of biological role, catalyzes the translocation of specific phospholipids from the cytoplasmic to the extracellular/lumenal leaflet of membrane coupled to the hydrolysis of ATP. Thereby, participates in phospholipid transfer to apolipoproteins to form nascent high density lipoproteins/HDLs. Transports preferentially phosphatidylcholine over phosphatidylserine. May play a similar role in the efflux of intracellular cholesterol to apolipoproteins and the formation of nascent high density lipoproteins/HDLs. Translocates phospholipids from the outer face of the plasma membrane and forces it through its gateway and annulus into an elongated hydrophobic tunnel in its extracellular domain. In Mus musculus (Mouse), this protein is Phospholipid-transporting ATPase ABCA1.